The sequence spans 83 residues: Mitochondrial import inner membrane translocase subunit Tim8 B (83 aa).

Ala2 carries the post-translational modification N-acetylalanine. A Twin CX3C motif motif is present at residues 36-59 (CWDKCVEKPGSRLDSRTENCLSSC). 2 cysteine pairs are disulfide-bonded: Cys36/Cys59 and Cys40/Cys55.

It belongs to the small Tim family. As to quaternary structure, heterohexamer; possibly composed of 3 copies of TIMM8B and 3 copies of TIMM13, named soluble 70 kDa complex. Associates with the TIM22 complex, whose core is composed of TIMM22.

It is found in the mitochondrion inner membrane. Its function is as follows. Probable mitochondrial intermembrane chaperone that participates in the import and insertion of some multi-pass transmembrane proteins into the mitochondrial inner membrane. Also required for the transfer of beta-barrel precursors from the TOM complex to the sorting and assembly machinery (SAM complex) of the outer membrane. Acts as a chaperone-like protein that protects the hydrophobic precursors from aggregation and guide them through the mitochondrial intermembrane space. In Mus musculus (Mouse), this protein is Mitochondrial import inner membrane translocase subunit Tim8 B (Timm8b).